Here is a 349-residue protein sequence, read N- to C-terminus: 11-beta-hydroxysteroid dehydrogenase A (349 aa).

The chain crosses the membrane as a helical; Signal-anchor for type II membrane protein span at residues 10–30 (LVAPPFTFFFLCLFLPPYWGL). A Proline-knob motif is present at residues 13-26 (PPFTFFFLCLFLPP). Residues 54–80 (GASS…SARR), D105, and 132–135 (NAAI) each bind NADP(+). S184 provides a ligand contact to substrate. Y197 functions as the Proton acceptor in the catalytic mechanism. Residues 197–201 (YSASK) and K201 contribute to the NADP(+) site.

It belongs to the short-chain dehydrogenases/reductases (SDR) family. As to expression, expressed in seeds (at protein level).

Its subcellular location is the lipid droplet. It localises to the membrane. It carries out the reaction an 11beta-hydroxysteroid + NADP(+) = an 11-oxosteroid + NADPH + H(+). Its function is as follows. Has dehydrogenase activity against 11 beta-hydroxysteroid and 17 beta-hydroxysteroid. May be involved in signal transduction regulated by various sterols. The chain is 11-beta-hydroxysteroid dehydrogenase A from Arachis hypogaea (Peanut).